The primary structure comprises 464 residues: Argininosuccinate lyase (464 aa).

The protein belongs to the lyase 1 family. Argininosuccinate lyase subfamily.

The protein resides in the cytoplasm. The catalysed reaction is 2-(N(omega)-L-arginino)succinate = fumarate + L-arginine. The protein operates within amino-acid biosynthesis; L-arginine biosynthesis; L-arginine from L-ornithine and carbamoyl phosphate: step 3/3. This is Argininosuccinate lyase from Pseudomonas fluorescens (strain ATCC BAA-477 / NRRL B-23932 / Pf-5).